Reading from the N-terminus, the 429-residue chain is Histidine--tRNA ligase (429 aa).

The protein belongs to the class-II aminoacyl-tRNA synthetase family. In terms of assembly, homodimer.

The protein resides in the cytoplasm. It carries out the reaction tRNA(His) + L-histidine + ATP = L-histidyl-tRNA(His) + AMP + diphosphate + H(+). In Pseudomonas fluorescens (strain Pf0-1), this protein is Histidine--tRNA ligase.